We begin with the raw amino-acid sequence, 107 residues long: uncharacterized protein (107 aa).

2 consecutive transmembrane segments (helical) span residues 5-25 and 42-62; these read WTIIFALIFTLIVAIFAVINV and ILVILGSVLMGALIVFSVGIF. Residues 82–92 show a composition bias toward basic and acidic residues; that stretch reads IHKQEDTHLAD. Residues 82-107 form a disordered region; that stretch reads IHKQEDTHLADQTDTQDASAMIEKKD.

The protein resides in the cell membrane. This is an uncharacterized protein from Bacillus subtilis (strain 168).